Consider the following 89-residue polypeptide: Small ribosomal subunit protein uS15 (89 aa).

It belongs to the universal ribosomal protein uS15 family. As to quaternary structure, part of the 30S ribosomal subunit. Forms a bridge to the 50S subunit in the 70S ribosome, contacting the 23S rRNA.

Functionally, one of the primary rRNA binding proteins, it binds directly to 16S rRNA where it helps nucleate assembly of the platform of the 30S subunit by binding and bridging several RNA helices of the 16S rRNA. Forms an intersubunit bridge (bridge B4) with the 23S rRNA of the 50S subunit in the ribosome. The sequence is that of Small ribosomal subunit protein uS15 from Parafrankia sp. (strain EAN1pec).